The sequence spans 548 residues: Membrane protein insertase YidC (548 aa).

The helical transmembrane segment at asparagine 6 to aspartate 26 threads the bilayer. Positions asparagine 28–serine 55 are disordered. Residues glutamine 30 to glutamine 50 show a composition bias toward low complexity. 4 helical membrane-spanning segments follow: residues phenylalanine 350–tyrosine 370, leucine 420–leucine 440, leucine 458–isoleucine 478, and proline 499–valine 519.

Belongs to the OXA1/ALB3/YidC family. Type 1 subfamily. As to quaternary structure, interacts with the Sec translocase complex via SecD. Specifically interacts with transmembrane segments of nascent integral membrane proteins during membrane integration.

It localises to the cell inner membrane. In terms of biological role, required for the insertion and/or proper folding and/or complex formation of integral membrane proteins into the membrane. Involved in integration of membrane proteins that insert both dependently and independently of the Sec translocase complex, as well as at least some lipoproteins. Aids folding of multispanning membrane proteins. This chain is Membrane protein insertase YidC, found in Shigella flexneri.